Reading from the N-terminus, the 954-residue chain is Valine--tRNA ligase (954 aa).

Residues 48 to 58 carry the 'HIGH' region motif; the sequence is PNVTGSLHMGH. Positions 560 to 564 match the 'KMSKS' region motif; sequence KMSKS. Lysine 563 contacts ATP. The stretch at 883–954 forms a coiled coil; sequence AGFINKEAEL…QTQYQAIENL (72 aa).

It belongs to the class-I aminoacyl-tRNA synthetase family. ValS type 1 subfamily. Monomer.

The protein localises to the cytoplasm. The enzyme catalyses tRNA(Val) + L-valine + ATP = L-valyl-tRNA(Val) + AMP + diphosphate. Its function is as follows. Catalyzes the attachment of valine to tRNA(Val). As ValRS can inadvertently accommodate and process structurally similar amino acids such as threonine, to avoid such errors, it has a 'posttransfer' editing activity that hydrolyzes mischarged Thr-tRNA(Val) in a tRNA-dependent manner. This Actinobacillus pleuropneumoniae serotype 3 (strain JL03) protein is Valine--tRNA ligase.